Consider the following 478-residue polypeptide: Solute carrier family 2, facilitated glucose transporter member 8 (478 aa).

The segment at methionine 1 to alanine 20 is disordered. Topologically, residues methionine 1–arginine 25 are cytoplasmic. A compositionally biased stretch (low complexity) spans proline 11–alanine 20. The short motif at leucine 12–leucine 13 is the Dileucine internalization motif element. Residues valine 26–tyrosine 46 traverse the membrane as a helical segment. At serine 47 to serine 70 the chain is on the extracellular side. Residues tryptophan 71–leucine 91 traverse the membrane as a helical segment. Over aspartate 92–lysine 97 the chain is Cytoplasmic. A helical membrane pass occupies residues leucine 98 to glutamine 118. The Extracellular portion of the chain corresponds to asparagine 119 to arginine 127. The chain crosses the membrane as a helical span at residues leucine 128–isoleucine 148. At alanine 149–glycine 158 the chain is on the cytoplasmic side. The helical transmembrane segment at serine 159–leucine 179 threads the bilayer. Glutamine 162 contacts D-glucose. Residues glutamate 180 to arginine 182 lie on the Extracellular side of the membrane. Residues tryptophan 183–proline 203 form a helical membrane-spanning segment. Residues glutamate 204–proline 257 are Cytoplasmic-facing. A helical membrane pass occupies residues phenylalanine 258–phenylalanine 278. D-glucose-binding positions include glutamine 268–glutamine 269 and asparagine 274. Over tyrosine 279–serine 293 the chain is Extracellular. Residues leucine 294–methionine 314 form a helical membrane-spanning segment. The Cytoplasmic portion of the chain corresponds to aspartate 315–arginine 320. Residues leucine 321 to phenylalanine 341 traverse the membrane as a helical segment. The Extracellular portion of the chain corresponds to lysine 342 to asparagine 368. Residue asparagine 350 is glycosylated (N-linked (GlcNAc...) asparagine). Residues valine 369–glycine 389 form a helical membrane-spanning segment. The Cytoplasmic segment spans residues tryptophan 390–histidine 405. Tryptophan 395 contacts D-glucose. The helical transmembrane segment at valine 406 to threonine 426 threads the bilayer. At lysine 427–tyrosine 439 the chain is on the extracellular side. Residues glycine 440–valine 460 form a helical membrane-spanning segment. At proline 461–arginine 478 the chain is on the cytoplasmic side.

It belongs to the major facilitator superfamily. Sugar transporter (TC 2.A.1.1) family. Glucose transporter subfamily. In terms of assembly, interacts with AP2B1. In terms of tissue distribution, abundantly expressed in testis and more moderately in lung, kidney, spleen, intestine, skeletal muscle, liver and mammary gland.

Its subcellular location is the cell membrane. It localises to the cytoplasmic vesicle membrane. The enzyme catalyses D-glucose(out) = D-glucose(in). It carries out the reaction D-fructose(out) = D-fructose(in). It catalyses the reaction L-dehydroascorbate(out) = L-dehydroascorbate(in). The catalysed reaction is alpha,alpha-trehalose(in) = alpha,alpha-trehalose(out). With respect to regulation, inhibited by cytochalasin B. Insulin-regulated facilitative hexose transporter that mediates the transport of glucose and fructose. Facilitates hepatic influx of dietary trehalose, which in turn inhibits glucose and fructose influx triggering a starvation signal and hepatic autophagy through activation of AMPK and ULK1. Also able to mediate the transport of dehydroascorbate. The polypeptide is Solute carrier family 2, facilitated glucose transporter member 8 (Bos taurus (Bovine)).